Consider the following 175-residue polypeptide: Probable DNA-directed RNA polymerase subunit delta (175 aa).

The HTH HARE-type domain maps to 14–81; sequence CSMIEVVHSV…GENRWGLRSW (68 aa). Positions 91–175 are disordered; that stretch reads ILPQPKPKKK…DETEEEEEEL (85 aa). The span at 106-175 shows a compositional bias: acidic residues; it reads DGFDDYIEED…DETEEEEEEL (70 aa).

Belongs to the RpoE family. In terms of assembly, RNAP is composed of a core of 2 alpha, a beta and a beta' subunits. The core is associated with a delta subunit and one of several sigma factors.

In terms of biological role, participates in both the initiation and recycling phases of transcription. In the presence of the delta subunit, RNAP displays an increased specificity of transcription, a decreased affinity for nucleic acids, and an increased efficiency of RNA synthesis because of enhanced recycling. This chain is Probable DNA-directed RNA polymerase subunit delta, found in Bacillus anthracis.